A 470-amino-acid polypeptide reads, in one-letter code: TNF receptor-associated factor 4 (470 aa).

The RING-type zinc-finger motif lies at 18-58; it reads CPLCGKPMREPVQVSTCGHRFCDTCLQEFLSEGVFKCPEDQ. TRAF-type zinc fingers lie at residues 102–154, 155–208, and 209–266; these read HLNT…EAYE, SHEG…DTIQ, and SHQY…KLAM. A Glycyl lysine isopeptide (Lys-Gly) (interchain with G-Cter in ubiquitin) cross-link involves residue Lys-263. Residues 277-309 are a coiled coil; it reads HLAMMCALVSRQRQELQELRRELEELSVGSDGV. In terms of domain architecture, MATH spans 307–462; it reads DGVLIWKIGS…DDAVFIRAAV (156 aa). Ser-426 is modified (phosphoserine).

This sequence belongs to the TNF receptor-associated factor family. B subfamily. Homotrimer. Interacts with LTBR/TNFRSF3, NGFR/TNFRSF16, RPS6KB1 and TGFB1I1. Interacts with SMURF1. Interacts (via TRAF domain) with MAP3K4 (via kinase domain). Interacts with NCF1, TICAM1, IRAK1 and TRAF6, and is probably part of a complex containing TRAF4, NCF1, TICAM1, IRAK1 and TRAF6. Interacts (via MATH domain) with GP6 and GP1BB. Interacts with EGFR (via C-terminal region); this interaction promotes the formation of EGFR asymmetric dimers. Interacts with PKM; this interaction promotes PKM kinase activity. Post-translationally, polyubiquitinated, leading to its proteasomal degradation. Ubiquitinated at Lys-263 by the SCF(FBXL2) complex, leading to its degradation by the proteasome. In terms of tissue distribution, expressed in epithelial cells of thymus, dendritic cells of lymph node, and in the basal cell layer of epithelia such as epidermis, nasopharynx, respiratory tract, salivary gland, and esophagus.

The protein localises to the cytoplasm. The protein resides in the nucleus. It localises to the perinuclear region. It is found in the cell junction. Its subcellular location is the tight junction. The protein localises to the cell membrane. The protein resides in the cytoskeleton. It carries out the reaction S-ubiquitinyl-[E2 ubiquitin-conjugating enzyme]-L-cysteine + [acceptor protein]-L-lysine = [E2 ubiquitin-conjugating enzyme]-L-cysteine + N(6)-ubiquitinyl-[acceptor protein]-L-lysine.. The protein operates within protein degradation; proteasomal ubiquitin-dependent pathway. In terms of biological role, adapter protein with E3 ligase activity that is involved in many diverse biological processes including cell proliferation, migration, differentiation, DNA repair, platelet activation or apoptosis. Promotes EGFR-mediated signaling by facilitating the dimerization of EGFR and downstream AKT activation thereby promoting cell proliferation. Ubiquitinates SMURF2 through 'Lys-48'-linked ubiquitin chain leading to SMURF2 degradation through the proteasome and subsequently osteogenic differentiation. Promotes 'Lys-63'-mediated ubiquitination of CHK1 which in turn activates cell cycle arrest and activation of DNA repair. In addition, promotes an atypical 'Lys-29'-linked ubiquitination at the C-terminal end of IRS1 which is crucial for insulin-like growth factor (IGF) signal transduction. Regulates activation of NF-kappa-B in response to signaling through Toll-like receptors. Required for normal skeleton development, and for normal development of the respiratory tract. Required for activation of RPS6KB1 in response to TNF signaling. Modulates TRAF6 functions. Inhibits adipogenic differentiation by activating pyruvate kinase PKM activity and subsequently the beta-catenin signaling pathway. This Homo sapiens (Human) protein is TNF receptor-associated factor 4 (TRAF4).